Reading from the N-terminus, the 468-residue chain is ATP synthase subunit beta (468 aa).

Residue 150-157 (GGAGVGKT) participates in ATP binding.

Belongs to the ATPase alpha/beta chains family. F-type ATPases have 2 components, CF(1) - the catalytic core - and CF(0) - the membrane proton channel. CF(1) has five subunits: alpha(3), beta(3), gamma(1), delta(1), epsilon(1). CF(0) has three main subunits: a(1), b(2) and c(9-12). The alpha and beta chains form an alternating ring which encloses part of the gamma chain. CF(1) is attached to CF(0) by a central stalk formed by the gamma and epsilon chains, while a peripheral stalk is formed by the delta and b chains.

Its subcellular location is the cell inner membrane. The catalysed reaction is ATP + H2O + 4 H(+)(in) = ADP + phosphate + 5 H(+)(out). Produces ATP from ADP in the presence of a proton gradient across the membrane. The catalytic sites are hosted primarily by the beta subunits. In Acidovorax ebreus (strain TPSY) (Diaphorobacter sp. (strain TPSY)), this protein is ATP synthase subunit beta.